The primary structure comprises 178 residues: Major urinary protein 4 (178 aa).

An N-terminal signal peptide occupies residues 1–16; that stretch reads MKLLLCLGLTLVCIHA. A disulfide bridge connects residues Cys-80 and Cys-173.

Belongs to the calycin superfamily. Lipocalin family. Expressed in lacrimal gland, parotid gland, sublingual gland, nasal mucus, and vomeronasal organ.

The protein resides in the secreted. In terms of biological role, binds pheromones, likely to displace pheromones complexed to urinary MUPs and transport them to the vomeronasal organ (VNO) where they associate with their neuronal receptor(s). MUP4 is highly specific for the male mouse pheromone 2-sec-butyl-4,5-dihydrothiazole (SBT). The polypeptide is Major urinary protein 4 (Mup4) (Mus musculus (Mouse)).